A 403-amino-acid polypeptide reads, in one-letter code: Envelope glycoprotein D (403 aa).

The N-terminal stretch at 1–34 (MNRYRYESIFFRYISSTRMILIICLLLGIGDMSA) is a signal peptide. Over 35–357 (MGLKKDNSPI…ISTEKKSRTQ (323 aa)) the chain is Virion surface. Residues N87 and N138 are each glycosylated (N-linked (GlcNAc...) asparagine; by host). Intrachain disulfides connect C88–C209, C127–C222, and C139–C148. N-linked (GlcNAc...) asparagine; by host glycosylation is found at N230 and N306. The helical transmembrane segment at 358 to 378 (IIISLVVLCVMFCFIVIGSGI) threads the bilayer. The Intravirion segment spans residues 379 to 403 (WILRKHRKTVMYDRRRPSRRAYSRL).

This sequence belongs to the herpesviridae glycoprotein D family.

Its subcellular location is the virion membrane. Functionally, envelope glycoprotein that binds to host cell entry receptors, promoting the virus entry into host cells. May trigger fusion with host membrane, by recruiting the fusion machinery composed of gB and gH/gL. This Gallus gallus (Chicken) protein is Envelope glycoprotein D (MDV094).